Here is an 82-residue protein sequence, read N- to C-terminus: Cytochrome b559 subunit alpha (82 aa).

The helical transmembrane segment at 21 to 35 (VIHSITIPSLFIAGW) threads the bilayer. His23 is a heme binding site.

The protein belongs to the PsbE/PsbF family. Heterodimer of an alpha subunit and a beta subunit. PSII is composed of 1 copy each of membrane proteins PsbA, PsbB, PsbC, PsbD, PsbE, PsbF, PsbH, PsbI, PsbJ, PsbK, PsbL, PsbM, PsbT, PsbX, PsbY, PsbZ, Psb30/Ycf12, at least 3 peripheral proteins of the oxygen-evolving complex and a large number of cofactors. It forms dimeric complexes. Heme b serves as cofactor.

It localises to the plastid. It is found in the chloroplast thylakoid membrane. Its function is as follows. This b-type cytochrome is tightly associated with the reaction center of photosystem II (PSII). PSII is a light-driven water:plastoquinone oxidoreductase that uses light energy to abstract electrons from H(2)O, generating O(2) and a proton gradient subsequently used for ATP formation. It consists of a core antenna complex that captures photons, and an electron transfer chain that converts photonic excitation into a charge separation. The chain is Cytochrome b559 subunit alpha from Stigeoclonium helveticum (Green alga).